The primary structure comprises 552 residues: MAGUK p55 subfamily member 2 (552 aa).

L27 domains follow at residues 8–59 (SESA…EETK) and 60–118 (LEAV…YETP). S42 is subject to Phosphoserine. Residue T117 is modified to Phosphothreonine. S121 carries the post-translational modification Phosphoserine. The region spanning 140–219 (MVGIRKTAGE…SVILKILPSY (80 aa)) is the PDZ domain. Residues 225 to 293 (PRQVFVKCHF…PSQLLEEKRK (69 aa)) enclose the SH3 domain. Positions 350-537 (RKTLVLIGAQ…TFRELQTAME (188 aa)) constitute a Guanylate kinase-like domain.

It belongs to the MAGUK family. As to quaternary structure, can homomultimerise. Interacts with CACNG2. Interacts (via the SH3-Guanylate kinase-like sub-module) with DLG4/PSD95 and DLGAP1/GKAP. Interacts (via the PDZ domain) with CADM1 (via C-terminus). Interacts with KCNN2/SK2 (via N-terminal domain). Interacts with SRC. In terms of processing, phosphorylated by SRC. As to expression, expressed in pyramidal neurons of CA1 region of the hippocampus.

It is found in the cell projection. The protein localises to the dendrite. The protein resides in the postsynaptic density. Its subcellular location is the cytoplasm. It localises to the cytoskeleton. It is found in the membrane. Functionally, postsynaptic MAGUK scaffold protein that links CADM1 cell adhesion molecules to core components of the postsynaptic density. In CA1 pyramidal neurons, required for synaptic KCNN2-containing channel function and long-term potentiation expression. Seems to negatively regulate SRC function in epithelial cells. In Mus musculus (Mouse), this protein is MAGUK p55 subfamily member 2.